An 860-amino-acid chain; its full sequence is Putative mixed-linked glucan synthase 1 (860 aa).

The next 2 membrane-spanning stretches (helical) occupy residues 63–83 (ILHPYRFLILARLIAIVAFFA) and 93–113 (GAWLWTMSMVGDVWFGFSWVL). Aspartate 183 is an active-site residue. Positions 235 to 263 (ELMSDHRRVRREYEEFKVRIDSLSSTIRQ) form a coiled coil. Positions 381 and 383 each coordinate substrate. Aspartate 549 is a catalytic residue. 6 helical membrane passes run 625-645 (TYPIVTVFIFFYNLFPVMWLI), 655-675 (FGEYLLYLVAVIAMIHVIGMF), 693-713 (FYMIGSTGVYPTAVLYMALKL), 747-767 (LLIPTIVIMVVNVAAVGVAVG), 781-801 (LAVLGMVFNVWILVLLYPFAL), and 812-832 (AVLFVAMAMAVAAVAAMYVAF).

It belongs to the glycosyltransferase 2 family. Plant cellulose synthase-like F subfamily.

The protein localises to the golgi apparatus membrane. In terms of biological role, may catalyze both beta-1,3 and beta-1,4 glycosidic linkage on beta-D-glucan. Essential for (1,3;1,4)-beta-D-glucans synthesis in grasses and cereals (Poaceae). The mixed-linked glucans (which are not present in walls of dicotyledons or most other monocotyledonous plants) are particularly important constituents of the walls of the starchy endosperm and aleurone cells of cereal grains such as oats, wheat, rice and barley. They can account for up to 70% by weight of the wall. This is Putative mixed-linked glucan synthase 1 (CSFL1) from Oryza sativa subsp. japonica (Rice).